The sequence spans 99 residues: Protein dpy-30 homolog (99 aa).

Residue M1 is modified to N-acetylmethionine. Positions 1–26 (MEPEQMLEGQTQVAENPHSEYGLTDN) are disordered. S19 carries the post-translational modification Phosphoserine. Position 35 is an N6-acetyllysine; alternate (K35). K35 is covalently cross-linked (Glycyl lysine isopeptide (Lys-Gly) (interchain with G-Cter in SUMO2); alternate).

It belongs to the dpy-30 family. Homodimer. Core component of several methyltransferase-containing complexes including MLL1/MLL, MLL2/3 (also named ASCOM complex) and MLL4/WBP7. Each complex is at least composed of ASH2L, RBBP5, WDR5, DPY30, one or more specific histone methyltransferases (KMT2A/MLL1, KMT2D/MLL2, KMT2C/MLL3 and KMT2B/MLL4), and the facultative components MEN1, HCFC1, HCFC2, NCOA6, KDM6A, PAXIP1/PTIP, PAGR1 and alpha- and beta-tubulin. Interacts with ASH2L; the interaction is direct. Interacts with ARFGEF1. Component of the SET1 complex, at least composed of the catalytic subunit (SETD1A or SETD1B), WDR5, WDR82, RBBP5, ASH2L/ASH2, CXXC1/CFP1, HCFC1 and DPY30.

The protein resides in the nucleus. Its subcellular location is the golgi apparatus. The protein localises to the trans-Golgi network. As part of the MLL1/MLL complex, involved in the methylation of histone H3 at 'Lys-4', particularly trimethylation. Histone H3 'Lys-4' methylation represents a specific tag for epigenetic transcriptional activation. May play some role in histone H3 acetylation. In embryonic stem cells, may play a crucial role in retinoic acid-induced differentiation along the neural lineage, regulating gene induction and H3 'Lys-4' methylation at key developmental loci. May also play an indirect or direct role in endosomal transport. This Bos taurus (Bovine) protein is Protein dpy-30 homolog (DPY30).